The primary structure comprises 390 residues: Adherens junction-associated protein 1 (390 aa).

An N-terminal signal peptide occupies residues 1-37 (MWITQLLGIRSGPPLGSHAWILIAIFQLAMDFIICES). At 38–262 (ESPGKAYKHL…NDTSGLAVHQ (225 aa)) the chain is on the extracellular side. The tract at residues 218–253 (LQNPGIHNGKKSPGRISTTDPNPGNGKTARPPRIPN) is disordered. The helical transmembrane segment at 263-283 (IITITVSLIMVIAALITTLVL) threads the bilayer. A targeting signals region spans residues 283–390 (LKNCCAQSGN…VSEKWFEISC (108 aa)). Residues 284-390 (KNCCAQSGNA…VSEKWFEISC (107 aa)) lie on the Cytoplasmic side of the membrane.

It localises to the basolateral cell membrane. The protein localises to the apical cell membrane. The protein resides in the cell junction. It is found in the adherens junction. Its function is as follows. May play a role in cell adhesion and cell migration. The protein is Adherens junction-associated protein 1 (ajap1) of Xenopus tropicalis (Western clawed frog).